The following is a 471-amino-acid chain: Tetratricopeptide repeat protein 29 (471 aa).

TPR repeat units follow at residues 92-131 (DKLR…EAAE), 136-173 (YEEV…AQLI), 182-215 (AEAE…TQGR), 234-267 (VRTY…AREG), 274-307 (GEAS…STSL), 314-347 (GRAY…ARNN), and 354-387 (IQAC…AMEV).

The protein resides in the cytoplasm. Its subcellular location is the cytoskeleton. It is found in the flagellum axoneme. Its function is as follows. Axonemal protein which is implicated in axonemal and/or peri-axonemal structure assembly and regulates flagellum assembly and beating and therefore sperm motility. The polypeptide is Tetratricopeptide repeat protein 29 (Ttc29) (Rattus norvegicus (Rat)).